A 500-amino-acid polypeptide reads, in one-letter code: Lysine--tRNA ligase (500 aa).

Mg(2+)-binding residues include glutamate 410 and glutamate 417.

It belongs to the class-II aminoacyl-tRNA synthetase family. In terms of assembly, homodimer. Mg(2+) serves as cofactor.

It localises to the cytoplasm. It carries out the reaction tRNA(Lys) + L-lysine + ATP = L-lysyl-tRNA(Lys) + AMP + diphosphate. The chain is Lysine--tRNA ligase from Shewanella sediminis (strain HAW-EB3).